The chain runs to 449 residues: Putative F-box/LRR-repeat protein 23 (449 aa).

LRR repeat units lie at residues K14–L37 and G39–R64. The region spanning L178–I225 is the F-box domain. LRR repeat units follow at residues W261–R286, C287–S311, Y312–R337, S344–L367, G369–Q394, and V401–D427.

This is Putative F-box/LRR-repeat protein 23 (FBL23) from Arabidopsis thaliana (Mouse-ear cress).